A 331-amino-acid chain; its full sequence is tRNA-dihydrouridine(20/20a) synthase (331 aa).

Residues 18-20 (PML) and Gln70 contribute to the FMN site. The active-site Proton donor is the Cys100. FMN contacts are provided by residues Lys139, His172, 212-214 (NGG), and 234-235 (GR).

The protein belongs to the Dus family. DusA subfamily. FMN serves as cofactor.

It carries out the reaction 5,6-dihydrouridine(20) in tRNA + NADP(+) = uridine(20) in tRNA + NADPH + H(+). The catalysed reaction is 5,6-dihydrouridine(20) in tRNA + NAD(+) = uridine(20) in tRNA + NADH + H(+). It catalyses the reaction 5,6-dihydrouridine(20a) in tRNA + NADP(+) = uridine(20a) in tRNA + NADPH + H(+). The enzyme catalyses 5,6-dihydrouridine(20a) in tRNA + NAD(+) = uridine(20a) in tRNA + NADH + H(+). In terms of biological role, catalyzes the synthesis of 5,6-dihydrouridine (D), a modified base found in the D-loop of most tRNAs, via the reduction of the C5-C6 double bond in target uridines. Specifically modifies U20 and U20a in tRNAs. The sequence is that of tRNA-dihydrouridine(20/20a) synthase from Escherichia coli O6:H1 (strain CFT073 / ATCC 700928 / UPEC).